The following is a 579-amino-acid chain: CTP synthase (579 aa).

The interval 1–281 is amidoligase domain; it reads MPALRKHPQT…DAYVVRRLNL (281 aa). S23 lines the CTP pocket. S23 provides a ligand contact to UTP. Residues 24-29 and D81 each bind ATP; that span reads SLGKGL. Mg(2+)-binding residues include D81 and E155. Residues 162–164, 202–207, and K238 each bind CTP; these read DIE and KTKPTQ. Residues 202 to 207 and K238 contribute to the UTP site; that span reads KTKPTQ. The Glutamine amidotransferase type-1 domain occupies 306–554; sequence RIALVGKYID…IGAALDYKAA (249 aa). G369 is an L-glutamine binding site. The Nucleophile; for glutamine hydrolysis role is filled by C396. L-glutamine is bound by residues 397–400, E419, and R480; that span reads LGLQ. Catalysis depends on residues H527 and E529.

It belongs to the CTP synthase family. In terms of assembly, homotetramer.

The enzyme catalyses UTP + L-glutamine + ATP + H2O = CTP + L-glutamate + ADP + phosphate + 2 H(+). The catalysed reaction is L-glutamine + H2O = L-glutamate + NH4(+). It catalyses the reaction UTP + NH4(+) + ATP = CTP + ADP + phosphate + 2 H(+). It participates in pyrimidine metabolism; CTP biosynthesis via de novo pathway; CTP from UDP: step 2/2. Allosterically activated by GTP, when glutamine is the substrate; GTP has no effect on the reaction when ammonia is the substrate. The allosteric effector GTP functions by stabilizing the protein conformation that binds the tetrahedral intermediate(s) formed during glutamine hydrolysis. Inhibited by the product CTP, via allosteric rather than competitive inhibition. In terms of biological role, catalyzes the ATP-dependent amination of UTP to CTP with either L-glutamine or ammonia as the source of nitrogen. Regulates intracellular CTP levels through interactions with the four ribonucleotide triphosphates. This chain is CTP synthase, found in Mycobacterium sp. (strain JLS).